A 90-amino-acid polypeptide reads, in one-letter code: Putative membrane protein insertion efficiency factor (90 aa).

Positions 68 to 90 (VPAHFSLRRNPQYKEEDHRGKKR) are disordered. Basic and acidic residues predominate over residues 79–90 (QYKEEDHRGKKR).

This sequence belongs to the UPF0161 family.

It localises to the cell membrane. Functionally, could be involved in insertion of integral membrane proteins into the membrane. In Lactiplantibacillus plantarum (strain ATCC BAA-793 / NCIMB 8826 / WCFS1) (Lactobacillus plantarum), this protein is Putative membrane protein insertion efficiency factor.